A 426-amino-acid polypeptide reads, in one-letter code: Histidine--tRNA ligase (426 aa).

Belongs to the class-II aminoacyl-tRNA synthetase family. Homodimer.

The protein localises to the cytoplasm. It carries out the reaction tRNA(His) + L-histidine + ATP = L-histidyl-tRNA(His) + AMP + diphosphate + H(+). The polypeptide is Histidine--tRNA ligase (Streptococcus equi subsp. zooepidemicus (strain MGCS10565)).